A 187-amino-acid polypeptide reads, in one-letter code: Nodulin-related protein 1 (187 aa).

An N-acetylmethionine modification is found at Met1. 2 disordered regions span residues 1–66 (MDFF…ATNA) and 132–176 (YETS…HGFG). Basic and acidic residues predominate over residues 7–48 (QVKKKFSDKKPESSDPEPNHNKNKPGHTEPTTHKPGHGEPTT). A compositionally biased stretch (gly residues) spans 142 to 158 (GGTGSHGNVGGHGGGAG).

Interacts with RPS2. In terms of tissue distribution, expressed in roots, leaves, flowers and siliques.

Its function is as follows. Prevents accumulation of abscisic acid (ABA) after heat treatment, thus reducing thermotolerance. May be a negative regulator of the ABA signaling/synthesis pathway. Required for defense responses against avirulent bacteria such as P.syringae pv. tomato DC3000 (avrRpt2). The sequence is that of Nodulin-related protein 1 from Arabidopsis thaliana (Mouse-ear cress).